A 476-amino-acid chain; its full sequence is Bifunctional protein HldE (476 aa).

The interval 1–319 (MKVSLPAFEK…RALSVNHGES (319 aa)) is ribokinase. Residue 195–198 (NMGE) coordinates ATP. The active site involves aspartate 264. The cytidylyltransferase stretch occupies residues 345–476 (MTNGCFDILH…SIIENIMANQ (132 aa)).

In the N-terminal section; belongs to the carbohydrate kinase PfkB family. The protein in the C-terminal section; belongs to the cytidylyltransferase family. Homodimer.

The enzyme catalyses D-glycero-beta-D-manno-heptose 7-phosphate + ATP = D-glycero-beta-D-manno-heptose 1,7-bisphosphate + ADP + H(+). It catalyses the reaction D-glycero-beta-D-manno-heptose 1-phosphate + ATP + H(+) = ADP-D-glycero-beta-D-manno-heptose + diphosphate. Its pathway is nucleotide-sugar biosynthesis; ADP-L-glycero-beta-D-manno-heptose biosynthesis; ADP-L-glycero-beta-D-manno-heptose from D-glycero-beta-D-manno-heptose 7-phosphate: step 1/4. It functions in the pathway nucleotide-sugar biosynthesis; ADP-L-glycero-beta-D-manno-heptose biosynthesis; ADP-L-glycero-beta-D-manno-heptose from D-glycero-beta-D-manno-heptose 7-phosphate: step 3/4. Its function is as follows. Catalyzes the phosphorylation of D-glycero-D-manno-heptose 7-phosphate at the C-1 position to selectively form D-glycero-beta-D-manno-heptose-1,7-bisphosphate. In terms of biological role, catalyzes the ADP transfer from ATP to D-glycero-beta-D-manno-heptose 1-phosphate, yielding ADP-D-glycero-beta-D-manno-heptose. This chain is Bifunctional protein HldE, found in Shewanella sediminis (strain HAW-EB3).